The chain runs to 319 residues: MNYLEFEKPLSEIEGKAEELRALARGNREMDVEKEASALDKKAETLLKDLYKDLTPWRKCQVARHPDRPHCKDYIEGLFTEYTPLAGDRNFADDHAIMGGLARFNDNPVVVIGQEKGHDTKTRIERNFGMARPEGYRKAIRLMEMAHRFRLPVITLVDTPGAYPGKGAEERGQAEAIARATQKCLEIGVPLVAVVIGEGGSGGAVALATANRIAMLEHSVYSVISPEGCASILWKDAEKMREAAEALRLTAQDLHKLGVIDRIIKEPLGGAQRGRRETVDAVGKAIEMMLKELVGRKPEWLVKDRRNKFLDMGSKGLAA.

The CoA carboxyltransferase C-terminal domain occupies 38–292 (ALDKKAETLL…GKAIEMMLKE (255 aa)).

This sequence belongs to the AccA family. In terms of assembly, acetyl-CoA carboxylase is a heterohexamer composed of biotin carboxyl carrier protein (AccB), biotin carboxylase (AccC) and two subunits each of ACCase subunit alpha (AccA) and ACCase subunit beta (AccD).

It localises to the cytoplasm. The catalysed reaction is N(6)-carboxybiotinyl-L-lysyl-[protein] + acetyl-CoA = N(6)-biotinyl-L-lysyl-[protein] + malonyl-CoA. It participates in lipid metabolism; malonyl-CoA biosynthesis; malonyl-CoA from acetyl-CoA: step 1/1. Functionally, component of the acetyl coenzyme A carboxylase (ACC) complex. First, biotin carboxylase catalyzes the carboxylation of biotin on its carrier protein (BCCP) and then the CO(2) group is transferred by the carboxyltransferase to acetyl-CoA to form malonyl-CoA. This is Acetyl-coenzyme A carboxylase carboxyl transferase subunit alpha from Cereibacter sphaeroides (strain ATCC 17029 / ATH 2.4.9) (Rhodobacter sphaeroides).